We begin with the raw amino-acid sequence, 228 residues long: 2,3-bisphosphoglycerate-dependent phosphoglycerate mutase (228 aa).

Residues R8–N15, T21–G22, R60, E87–Y90, K98, R114–R115, and G183–N184 contribute to the substrate site. H9 functions as the Tele-phosphohistidine intermediate in the catalytic mechanism. E87 acts as the Proton donor/acceptor in catalysis.

Belongs to the phosphoglycerate mutase family. BPG-dependent PGAM subfamily.

The enzyme catalyses (2R)-2-phosphoglycerate = (2R)-3-phosphoglycerate. It functions in the pathway carbohydrate degradation; glycolysis; pyruvate from D-glyceraldehyde 3-phosphate: step 3/5. Its function is as follows. Catalyzes the interconversion of 2-phosphoglycerate and 3-phosphoglycerate. This Staphylococcus aureus (strain Mu3 / ATCC 700698) protein is 2,3-bisphosphoglycerate-dependent phosphoglycerate mutase.